Consider the following 318-residue polypeptide: MFMINILTLILPILLAVAFLTLVERKILGYMQFRKGPNIVGPHGLLQPFADAIKLFTKEPLRPATSSTTMFIIAPVLALALALTMWSPLPMPYPLINMNLGVLFMLAMSSLAVYSILWSGWASNSKYALIGALRAVAQTISYEVTLAIILLSVLLMNGSYTLSTLATTQEQLWLLFPSWPLAMMWFISTLAETNRAPFDLTEGESELVSGFNVEYAAGPFALFFLAEYANIIMMNMFTAILFLGTFHNPCNPELYTTNLIIKTLLLTMSFLWIRASYPRFRYDQLMHLLWKNFLPLTLALCMWHISLPIMTASIPPQT.

The next 8 helical transmembrane spans lie at 2–22 (FMIN…FLTL), 70–90 (MFII…SPLP), 100–120 (LGVL…LWSG), 136–156 (VAQT…VLLM), 172–192 (LWLL…TLAE), 222–242 (LFFL…AILF), 253–273 (ELYT…FLWI), and 294–314 (LPLT…TASI).

Belongs to the complex I subunit 1 family. In terms of assembly, core subunit of respiratory chain NADH dehydrogenase (Complex I) which is composed of 45 different subunits.

It is found in the mitochondrion inner membrane. The enzyme catalyses a ubiquinone + NADH + 5 H(+)(in) = a ubiquinol + NAD(+) + 4 H(+)(out). Its function is as follows. Core subunit of the mitochondrial membrane respiratory chain NADH dehydrogenase (Complex I) which catalyzes electron transfer from NADH through the respiratory chain, using ubiquinone as an electron acceptor. Essential for the catalytic activity and assembly of complex I. In Balaenoptera musculus (Blue whale), this protein is NADH-ubiquinone oxidoreductase chain 1 (MT-ND1).